Consider the following 104-residue polypeptide: Ribonuclease P protein component 4 (104 aa).

The Zn(2+) site is built by cysteine 57, cysteine 60, cysteine 83, and cysteine 86.

This sequence belongs to the eukaryotic/archaeal RNase P protein component 4 family. In terms of assembly, consists of a catalytic RNA component and at least 4-5 protein subunits. Zn(2+) is required as a cofactor.

Its subcellular location is the cytoplasm. It catalyses the reaction Endonucleolytic cleavage of RNA, removing 5'-extranucleotides from tRNA precursor.. Its function is as follows. Part of ribonuclease P, a protein complex that generates mature tRNA molecules by cleaving their 5'-ends. This is Ribonuclease P protein component 4 from Saccharolobus islandicus (strain M.16.27) (Sulfolobus islandicus).